A 136-amino-acid chain; its full sequence is Replication enhancer (136 aa).

This sequence belongs to the geminiviridae replication enhancer protein family. Homooligomer. Interacts with the replication-associated protein (REP). Interacts with host proliferating cell nuclear antigen (PCNA). Interacts with host retinoblastoma-related protein 1 (RBR1), and may thereby deregulate the host cell cycle. Oligomerization and interaction with PCNA are necessary for optimal replication enhancement.

Increases viral DNA accumulation. Enhances infectivity and symptom expression. The sequence is that of Replication enhancer from Beet curly top virus (strain California/Logan) (BCTV).